Here is a 369-residue protein sequence, read N- to C-terminus: 4-hydroxyproline betaine 2-epimerase (369 aa).

Substrate-binding residues include tyrosine 56 and glutamine 162. Lysine 164 functions as the Proton donor/acceptor in the catalytic mechanism. Residues aspartate 194, glutamate 219, and aspartate 242 each coordinate Mg(2+). Catalysis depends on lysine 266, which acts as the Proton donor/acceptor. Alanine 295 provides a ligand contact to substrate.

Belongs to the mandelate racemase/muconate lactonizing enzyme family. The cofactor is Mg(2+).

The catalysed reaction is trans-4-hydroxy-L-proline betaine = cis-4-hydroxy-D-proline betaine. It carries out the reaction L-proline betaine = D-proline betaine. Its function is as follows. Catalyzes the 2-epimerization of trans-4-hydroxy-L-proline betaine (tHyp-B) to cis-4-hydroxy-D-proline betaine (cHyp-B). Is involved in a catabolic pathway that degrades tHyp-B to alpha-ketoglutarate. This pathway would permit the utilization of tHyp-B as a carbon and nitrogen source in the absence of osmotic stress, since tHyp-B functions as an osmolyte and is not catabolized when it is needed as osmoprotectant. Can also catalyze the racemization of L-proline betaine. This Paracoccus denitrificans (strain Pd 1222) protein is 4-hydroxyproline betaine 2-epimerase (hpbD).